We begin with the raw amino-acid sequence, 480 residues long: Proline--tRNA ligase (480 aa).

Belongs to the class-II aminoacyl-tRNA synthetase family. ProS type 3 subfamily. As to quaternary structure, homodimer.

Its subcellular location is the cytoplasm. It catalyses the reaction tRNA(Pro) + L-proline + ATP = L-prolyl-tRNA(Pro) + AMP + diphosphate. Its function is as follows. Catalyzes the attachment of proline to tRNA(Pro) in a two-step reaction: proline is first activated by ATP to form Pro-AMP and then transferred to the acceptor end of tRNA(Pro). The sequence is that of Proline--tRNA ligase from Pyrococcus horikoshii (strain ATCC 700860 / DSM 12428 / JCM 9974 / NBRC 100139 / OT-3).